The primary structure comprises 451 residues: Gamma-aminobutyric acid receptor subunit alpha-2 (451 aa).

A signal peptide spans 1–28 (MKTKLNIYNMQLLLFVFLVWDPARLVLA). Residues 29-249 (NIQEDEAKNN…MTAHFHLKRK (221 aa)) are Extracellular-facing. The N-linked (GlcNAc...) asparagine glycan is linked to N38. R94 serves as a coordination point for 4-aminobutanoate. N138 carries N-linked (GlcNAc...) asparagine glycosylation. T157 is a binding site for 4-aminobutanoate. Residues C166 and C180 are joined by a disulfide bond. A helical transmembrane segment spans residues 250-270 (IGYFVIQTYLPCIMTVILSQV). Residues 271–280 (SFWLNRESVP) are Cytoplasmic-facing. A helical transmembrane segment spans residues 281–300 (ARTVFGVTTVLTMTTLSISA). The Extracellular segment spans residues 301–311 (RNSLPKVAYAT). The helical transmembrane segment at 312–332 (AMDWFIAVCYAFVFSALIEFA) threads the bilayer. At 333–420 (TVNYFTKRGW…FNSVSKIDRM (88 aa)) the chain is on the cytoplasmic side. A helical transmembrane segment spans residues 421-441 (SRIVFPVLFGTFNLVYWATYL). The Extracellular portion of the chain corresponds to 442–451 (NREPVLGVSP).

The protein belongs to the ligand-gated ion channel (TC 1.A.9) family. Gamma-aminobutyric acid receptor (TC 1.A.9.5) subfamily. GABRA2 sub-subfamily. In terms of assembly, heteropentamer, formed by a combination of alpha (GABRA1-6), beta (GABRB1-3), gamma (GABRG1-3), delta (GABRD), epsilon (GABRE), rho (GABRR1-3), pi (GABRP) and theta (GABRQ) subunits, each subunit exhibiting distinct physiological and pharmacological properties. Interacts with UBQLN1. Interacts with KIF21B. Interacts with LHFPL4. Interacts with SHISA7; interaction leads to the regulation of GABA(A) receptor trafficking, channel deactivation kinetics and pharmacology. In terms of processing, glycosylated.

It is found in the postsynaptic cell membrane. It localises to the cell membrane. The protein resides in the cytoplasmic vesicle membrane. Its subcellular location is the cell projection. The protein localises to the dendrite. It catalyses the reaction chloride(in) = chloride(out). Activated by pentobarbital. Inhibited by the antagonist bicuculline. In terms of biological role, alpha subunit of the heteropentameric ligand-gated chloride channel gated by gamma-aminobutyric acid (GABA), a major inhibitory neurotransmitter in the brain. GABA-gated chloride channels, also named GABA(A) receptors (GABAAR), consist of five subunits arranged around a central pore and contain GABA active binding site(s) located at the alpha and beta subunit interface(s). When activated by GABA, GABAARs selectively allow the flow of chloride anions across the cell membrane down their electrochemical gradient. Chloride influx into the postsynaptic neuron following GABAAR opening decreases the neuron ability to generate a new action potential, thereby reducing nerve transmission. The alpha-2 subunit exhibits synaptogenic activity together with beta-2 and very little to no activity together with beta-3, the gamma-2 subunit being necessary but not sufficient to induce rapid synaptic contacts formation. The chain is Gamma-aminobutyric acid receptor subunit alpha-2 (GABRA2) from Pongo abelii (Sumatran orangutan).